We begin with the raw amino-acid sequence, 303 residues long: 2-dehydropantoate 2-reductase (303 aa).

Residues 7 to 12, N98, and A122 contribute to the NADP(+) site; that span reads GCGALG. A substrate-binding site is contributed by N98. The Proton donor role is filled by K176. Residues N180, N184, N194, and S244 each coordinate substrate. An NADP(+)-binding site is contributed by E256.

It belongs to the ketopantoate reductase family. Monomer.

It localises to the cytoplasm. It carries out the reaction (R)-pantoate + NADP(+) = 2-dehydropantoate + NADPH + H(+). Its pathway is cofactor biosynthesis; (R)-pantothenate biosynthesis; (R)-pantoate from 3-methyl-2-oxobutanoate: step 2/2. Catalyzes the NADPH-dependent reduction of ketopantoate into pantoic acid. The chain is 2-dehydropantoate 2-reductase (panE) from Shigella flexneri.